The primary structure comprises 236 residues: MATTHLDVCAVVPAAGFGRRMQTECPKQYLSIGNQTILEHSVYALLAHPRVKRVVIAISPGDSRFAQLPLANHPQITVVDGGDERADSVLAGLKAAGDAQWVLVHDAARPCLHQDDLARLLALSETSRTGGILAAPVRDTMKRAEPGKNAIAHTVDRNGLWHALTPQFFPRELLHDCLTRALNEGAAITDEASALEYCGFHPQLVEGRADNIKVTRPEDLALAEFYLTRTIHQENT.

This sequence belongs to the IspD/TarI cytidylyltransferase family. IspD subfamily. Homodimer.

The catalysed reaction is 2-C-methyl-D-erythritol 4-phosphate + CTP + H(+) = 4-CDP-2-C-methyl-D-erythritol + diphosphate. It participates in isoprenoid biosynthesis; isopentenyl diphosphate biosynthesis via DXP pathway; isopentenyl diphosphate from 1-deoxy-D-xylulose 5-phosphate: step 2/6. Its function is as follows. Catalyzes the formation of 4-diphosphocytidyl-2-C-methyl-D-erythritol from CTP and 2-C-methyl-D-erythritol 4-phosphate (MEP). The chain is 2-C-methyl-D-erythritol 4-phosphate cytidylyltransferase from Escherichia coli O157:H7.